We begin with the raw amino-acid sequence, 118 residues long: UPF0295 protein BcerKBAB4_0454 (118 aa).

2 consecutive transmembrane segments (helical) span residues 12–32 (IRTF…LGVF) and 43–63 (FMMV…WIGM).

Belongs to the UPF0295 family.

The protein resides in the cell membrane. The chain is UPF0295 protein BcerKBAB4_0454 from Bacillus mycoides (strain KBAB4) (Bacillus weihenstephanensis).